Consider the following 180-residue polypeptide: Large ribosomal subunit protein uL6 (180 aa).

Belongs to the universal ribosomal protein uL6 family. In terms of assembly, part of the 50S ribosomal subunit.

In terms of biological role, this protein binds to the 23S rRNA, and is important in its secondary structure. It is located near the subunit interface in the base of the L7/L12 stalk, and near the tRNA binding site of the peptidyltransferase center. The polypeptide is Large ribosomal subunit protein uL6 (Borrelia recurrentis (strain A1)).